A 146-amino-acid polypeptide reads, in one-letter code: Anti-sigma F factor (146 aa).

The protein belongs to the anti-sigma-factor family.

It catalyses the reaction L-seryl-[protein] + ATP = O-phospho-L-seryl-[protein] + ADP + H(+). It carries out the reaction L-threonyl-[protein] + ATP = O-phospho-L-threonyl-[protein] + ADP + H(+). Binds to sigma F and blocks its ability to form an RNA polymerase holoenzyme (E-sigma F). Phosphorylates SpoIIAA on a serine residue. This phosphorylation may enable SpoIIAA to act as an anti-anti-sigma factor that counteracts SpoIIAB and thus releases sigma F from inhibition. The protein is Anti-sigma F factor of Bacillus licheniformis.